We begin with the raw amino-acid sequence, 586 residues long: Major facilitator superfamily domain-containing protein 6-like (586 aa).

The next 2 membrane-spanning stretches (helical) occupy residues 50–70 (TLMG…AFLA) and 78–98 (ALLI…VLVP). Positions 133–160 (AQESASSHPAKRTAEVEMPGFRNPPGES) are disordered. Helical transmembrane passes span 246–266 (FILS…LEQV), 287–307 (LWVW…ALVG), 326–346 (GYSV…IPIC), 361–381 (IVGG…VGAI), 400–420 (ELVM…LHPF), 433–455 (LVGL…WSWW), 456–476 (SVLP…WAVG), 499–519 (FYGS…MRFS), and 521–541 (AVLY…LLSI).

It belongs to the major facilitator superfamily. MFSD6 family.

It is found in the membrane. The polypeptide is Major facilitator superfamily domain-containing protein 6-like (MFSD6L) (Homo sapiens (Human)).